The following is a 115-amino-acid chain: NAD(P)H-quinone oxidoreductase subunit M (115 aa).

It belongs to the complex I NdhM subunit family. As to quaternary structure, NDH-1 can be composed of about 15 different subunits; different subcomplexes with different compositions have been identified which probably have different functions.

It is found in the cellular thylakoid membrane. The enzyme catalyses a plastoquinone + NADH + (n+1) H(+)(in) = a plastoquinol + NAD(+) + n H(+)(out). The catalysed reaction is a plastoquinone + NADPH + (n+1) H(+)(in) = a plastoquinol + NADP(+) + n H(+)(out). NDH-1 shuttles electrons from an unknown electron donor, via FMN and iron-sulfur (Fe-S) centers, to quinones in the respiratory and/or the photosynthetic chain. The immediate electron acceptor for the enzyme in this species is believed to be plastoquinone. Couples the redox reaction to proton translocation, and thus conserves the redox energy in a proton gradient. Cyanobacterial NDH-1 also plays a role in inorganic carbon-concentration. The sequence is that of NAD(P)H-quinone oxidoreductase subunit M from Synechococcus sp. (strain CC9605).